The sequence spans 335 residues: Methylthioribose-1-phosphate isomerase (335 aa).

Substrate is bound by residues 47–49 (RGA), arginine 81, and glutamine 184. The Proton donor role is filled by aspartate 225. 235-236 (NK) serves as a coordination point for substrate.

It belongs to the eIF-2B alpha/beta/delta subunits family. MtnA subfamily.

The enzyme catalyses 5-(methylsulfanyl)-alpha-D-ribose 1-phosphate = 5-(methylsulfanyl)-D-ribulose 1-phosphate. It participates in amino-acid biosynthesis; L-methionine biosynthesis via salvage pathway; L-methionine from S-methyl-5-thio-alpha-D-ribose 1-phosphate: step 1/6. Catalyzes the interconversion of methylthioribose-1-phosphate (MTR-1-P) into methylthioribulose-1-phosphate (MTRu-1-P). The sequence is that of Methylthioribose-1-phosphate isomerase from Synechococcus sp. (strain CC9902).